A 4306-amino-acid polypeptide reads, in one-letter code: Cytoplasmic dynein 2 heavy chain 1 (4306 aa).

Positions 1 to 1650 (MAGSLSDVRK…YVQMVDSELQ (1650 aa)) are stem. 145–152 (LGVVLRKS) is a binding site for ATP. Residues 669–696 (KELEGYIQKLQNAAERLATENRRLRKWH) are a coiled coil. AAA regions lie at residues 1651–1875 (YTYE…VLRG), 1941–2161 (SALK…KQND), 2249–2505 (LTAD…WVLG), and 2617–2862 (HYGR…ESCK). ATP-binding positions include 1689–1696 (GPAGTGKT), 1979–1986 (GPSGAGKS), 2291–2298 (GPEGCGKG), and 2655–2662 (GRSGVGRR). The segment at 2880–3168 (AISSSKRKEL…AEVSKAQETI (289 aa)) is stalk. Coiled-coil stretches lie at residues 2896–2981 (LQAG…KEVQ), 3108–3199 (LETE…LATL), and 3407–3441 (IQHEKPDLEEQKTKLLQQEEDKKIQLARLEESLLE). AAA stretches follow at residues 3243–3472 (LCTE…LIQD) and 3689–3904 (MALF…VIDR).

This sequence belongs to the dynein heavy chain family. As to quaternary structure, the cytoplasmic dynein complex 2 is probably composed by a heavy chain DYNC2H1 homodimer and a number of DYNC2LI1 light intermediate chains. Widely expressed both in ciliated and unciliated tissues. Detected in brain and testis (at protein level).

It localises to the cytoplasm. The protein resides in the cytoskeleton. Its subcellular location is the cilium axoneme. The protein localises to the cell membrane. May function as a motor for intraflagellar retrograde transport. Functions in cilia biogenesis. May play a role in transport between endoplasmic reticulum and Golgi or organization of the Golgi in cells. The polypeptide is Cytoplasmic dynein 2 heavy chain 1 (Dync2h1) (Rattus norvegicus (Rat)).